The following is a 421-amino-acid chain: DUF724 domain-containing protein 8 (421 aa).

Composition is skewed to polar residues over residues 149–165 (TQGS…NANE) and 199–213 (PRNQ…TLEN). The segment at 149–229 (TQGSGDKTGD…NRKRKREENL (81 aa)) is disordered. The 175-residue stretch at 246–420 (VLPFEKKLRI…LEFLATASAP (175 aa)) folds into the DUF724 domain. The stretch at 361 to 397 (EKVTAEKESVKAENKRKILELQRLNEEMDKEIAQSKS) forms a coiled coil.

As to expression, expressed in leaves and flowers, and at lower levels in roots, stems and siliques.

The protein localises to the nucleus. Its function is as follows. May be involved in the polar growth of plant cells via transportation of RNAs. This chain is DUF724 domain-containing protein 8, found in Arabidopsis thaliana (Mouse-ear cress).